The chain runs to 842 residues: Outer membrane usher protein LpfC (842 aa).

Residues 1 to 21 (MTWTHLPLGNKTSRFTQSALA) form the signal peptide. Cys-819 and Cys-841 form a disulfide bridge.

Belongs to the fimbrial export usher family.

Its subcellular location is the cell outer membrane. Its function is as follows. Involved in the export and assembly of LpfA fimbrial subunits across the outer membrane. The protein is Outer membrane usher protein LpfC (lpfC) of Salmonella typhimurium (strain LT2 / SGSC1412 / ATCC 700720).